Here is a 144-residue protein sequence, read N- to C-terminus: Cytochrome c oxidase subunit 4 isoform 1, mitochondrial (144 aa).

The Mitochondrial matrix portion of the chain corresponds to 1-73; that stretch reads SVVKSEDYTL…SFAEMNRGSN (73 aa). K4 carries the N6-acetyllysine; alternate modification. N6-succinyllysine; alternate is present on K4. 2 positions are modified to phosphoserine: S31 and S33. K35 bears the N6-acetyllysine; alternate mark. At K35 the chain carries N6-succinyllysine; alternate. Residue K42 is modified to N6-acetyllysine. The chain crosses the membrane as a helical span at residues 74-99; it reads EWKTVVGAAMFFIGFTAILIMLEKRY. Residues 100–144 lie on the Mitochondrial intermembrane side of the membrane; it reads VYGPLPHTFDKEWVAMQTKRMLDLKVNPVDGLASKWDYEKKEWKK.

Belongs to the cytochrome c oxidase IV family. In terms of assembly, component of the cytochrome c oxidase (complex IV, CIV), a multisubunit enzyme composed of 14 subunits. The complex is composed of a catalytic core of 3 subunits MT-CO1, MT-CO2 and MT-CO3, encoded in the mitochondrial DNA, and 11 supernumerary subunits COX4I, COX5A, COX5B, COX6A, COX6B, COX6C, COX7A, COX7B, COX7C, COX8 and NDUFA4, which are encoded in the nuclear genome. The complex exists as a monomer or a dimer and forms supercomplexes (SCs) in the inner mitochondrial membrane with NADH-ubiquinone oxidoreductase (complex I, CI) and ubiquinol-cytochrome c oxidoreductase (cytochrome b-c1 complex, complex III, CIII), resulting in different assemblies (supercomplex SCI(1)III(2)IV(1) and megacomplex MCI(2)III(2)IV(2)). Interacts with PHB2; the interaction decreases in absence of SPHK2. Interacts with AFG1L. Interacts with ABCB7; this interaction allows the regulation of cellular iron homeostasis and cellular reactive oxygen species (ROS) levels in cardiomyocytes. Interacts with FLVCR2; this interaction occurs in the absence of heme and is disrupted upon heme binding. Interacts with IRGC.

The protein localises to the mitochondrion inner membrane. Its pathway is energy metabolism; oxidative phosphorylation. Its function is as follows. Component of the cytochrome c oxidase, the last enzyme in the mitochondrial electron transport chain which drives oxidative phosphorylation. The respiratory chain contains 3 multisubunit complexes succinate dehydrogenase (complex II, CII), ubiquinol-cytochrome c oxidoreductase (cytochrome b-c1 complex, complex III, CIII) and cytochrome c oxidase (complex IV, CIV), that cooperate to transfer electrons derived from NADH and succinate to molecular oxygen, creating an electrochemical gradient over the inner membrane that drives transmembrane transport and the ATP synthase. Cytochrome c oxidase is the component of the respiratory chain that catalyzes the reduction of oxygen to water. Electrons originating from reduced cytochrome c in the intermembrane space (IMS) are transferred via the dinuclear copper A center (CU(A)) of subunit 2 and heme A of subunit 1 to the active site in subunit 1, a binuclear center (BNC) formed by heme A3 and copper B (CU(B)). The BNC reduces molecular oxygen to 2 water molecules using 4 electrons from cytochrome c in the IMS and 4 protons from the mitochondrial matrix. The protein is Cytochrome c oxidase subunit 4 isoform 1, mitochondrial (COX4I1) of Pithecia pithecia (White-faced saki).